The sequence spans 943 residues: Isoleucine--tRNA ligase (943 aa).

Positions 58–68 match the 'HIGH' region motif; sequence PYANGKIHIGH. Glu567 contributes to the L-isoleucyl-5'-AMP binding site. The short motif at 608 to 612 is the 'KMSKS' region element; it reads KMSKS. Position 611 (Lys611) interacts with ATP. Cys906, Cys909, Cys926, and Cys929 together coordinate Zn(2+).

This sequence belongs to the class-I aminoacyl-tRNA synthetase family. IleS type 1 subfamily. In terms of assembly, monomer. It depends on Zn(2+) as a cofactor.

The protein localises to the cytoplasm. The enzyme catalyses tRNA(Ile) + L-isoleucine + ATP = L-isoleucyl-tRNA(Ile) + AMP + diphosphate. Its function is as follows. Catalyzes the attachment of isoleucine to tRNA(Ile). As IleRS can inadvertently accommodate and process structurally similar amino acids such as valine, to avoid such errors it has two additional distinct tRNA(Ile)-dependent editing activities. One activity is designated as 'pretransfer' editing and involves the hydrolysis of activated Val-AMP. The other activity is designated 'posttransfer' editing and involves deacylation of mischarged Val-tRNA(Ile). The chain is Isoleucine--tRNA ligase from Pseudomonas putida (strain ATCC 47054 / DSM 6125 / CFBP 8728 / NCIMB 11950 / KT2440).